An 834-amino-acid polypeptide reads, in one-letter code: Prominin-2 (834 aa).

A signal peptide spans 1 to 26 (MKHTLALLAPLLGLGLGLALSQLAAG). Residues 27 to 106 (ATDCKFLGPA…NEVVRYEAGY (80 aa)) are Extracellular-facing. A helical transmembrane segment spans residues 107–127 (VVCAVIAGLYLLLVPTAGLCF). Residues 128–153 (CCCRCHRRCGGRVKTEHKALACERAA) are Cytoplasmic-facing. A helical transmembrane segment spans residues 154 to 174 (LMVFLLLTTLLLLIGVVCAFV). The Extracellular segment spans residues 175–426 (TNQRTHEQMG…EVQRYETYRW (252 aa)). A glycan (N-linked (GlcNAc...) asparagine) is linked at N270. Residues 427-447 (IVGCVLCSVVLFVVLCNLLGL) form a helical membrane-spanning segment. At 448–472 (NLGIWGLSARDDPSHPEAKGEAGAR) the chain is on the cytoplasmic side. The helical transmembrane segment at 473-493 (FLMAGVGLSFLFAAPLILLVF) threads the bilayer. The Extracellular portion of the chain corresponds to 494-779 (ATFLVGGNVQ…LCDMMADPWN (286 aa)). A Phosphoserine modification is found at S727. Residues 780–800 (AFWFCLAWCTFFLIPSIIFAV) traverse the membrane as a helical segment. Topologically, residues 801 to 834 (KTSKYFRPIRKRLSSTSSEETQLFHIPRVTSLKL) are cytoplasmic. Position 818 is a phosphoserine (S818).

The protein belongs to the prominin family. As to quaternary structure, binds cholesterol. In terms of processing, glycosylated. As to expression, present in saliva within small membrane particles (at protein level). Expressed in kidney, prostate, trachea, esophagus, salivary gland, thyroid gland, mammary gland adrenal gland, placenta, stomach, spinal cord and liver. In submucosal tumor, expressed in spindle-shaped or stellate stromal cells. Expressed in prostate cancer cell lines.

The protein resides in the apical cell membrane. It is found in the basolateral cell membrane. The protein localises to the cell projection. It localises to the microvillus membrane. Its subcellular location is the cilium membrane. This Homo sapiens (Human) protein is Prominin-2 (PROM2).